The primary structure comprises 169 residues: Peptide methionine sulfoxide reductase MsrA (169 aa).

The active site involves Cys10.

This sequence belongs to the MsrA Met sulfoxide reductase family.

It carries out the reaction L-methionyl-[protein] + [thioredoxin]-disulfide + H2O = L-methionyl-(S)-S-oxide-[protein] + [thioredoxin]-dithiol. The catalysed reaction is [thioredoxin]-disulfide + L-methionine + H2O = L-methionine (S)-S-oxide + [thioredoxin]-dithiol. In terms of biological role, has an important function as a repair enzyme for proteins that have been inactivated by oxidation. Catalyzes the reversible oxidation-reduction of methionine sulfoxide in proteins to methionine. The protein is Peptide methionine sulfoxide reductase MsrA of Streptococcus mutans serotype c (strain ATCC 700610 / UA159).